The chain runs to 218 residues: Glutathione S-transferase Mu 1 (218 aa).

One can recognise a GST N-terminal domain in the interval 2-88 (PMILGYWNVR…YLARKHHLDG (87 aa)). Residue 7–8 (YW) coordinates glutathione. Threonine 34 is subject to Phosphothreonine. Glutathione is bound by residues 43–46 (RSQW), lysine 50, and 59–60 (NL). Phosphoserine is present on serine 67. Glutathione is bound at residue 72–73 (QS). The GST C-terminal domain maps to 90–208 (TEEERIRADI…KSSRYIATPI (119 aa)). Tyrosine 116 is a substrate binding site. Residue serine 210 is modified to Phosphoserine.

Homodimer.

The protein localises to the cytoplasm. It carries out the reaction RX + glutathione = an S-substituted glutathione + a halide anion + H(+). It catalyses the reaction prostaglandin A2 + glutathione = prostaglandin A2-S-(R)-glutathione. The catalysed reaction is prostaglandin J2 + glutathione = prostaglandin J2-S-(R)-glutathione. The enzyme catalyses prostaglandin J2 + glutathione = prostaglandin J2-S-(S)-glutathione. It carries out the reaction prostaglandin A2 + glutathione = prostaglandin A2-S-(S)-glutathione. It catalyses the reaction 11(S)-hydroxy-14(S),15(S)-epoxy-(5Z,8Z,12E)-eicosatrienoate + glutathione = (11S,15S)-dihydroxy-14(R)-S-glutathionyl-(5Z,8Z,12E)-eicosatrienoate. Functionally, conjugation of reduced glutathione to a wide number of exogenous and endogenous hydrophobic electrophiles. Involved in the formation of glutathione conjugates of both prostaglandin A2 (PGA2) and prostaglandin J2 (PGJ2). Participates in the formation of novel hepoxilin regioisomers. This chain is Glutathione S-transferase Mu 1, found in Mus musculus (Mouse).